A 283-amino-acid chain; its full sequence is Large ribosomal subunit protein uL2 (283 aa).

Positions 215-283 (RHKGIRPTVR…IRGRKKRINN (69 aa)) are disordered. A compositionally biased stretch (basic residues) spans 274–283 (IRGRKKRINN).

The protein belongs to the universal ribosomal protein uL2 family. As to quaternary structure, part of the 50S ribosomal subunit. Forms a bridge to the 30S subunit in the 70S ribosome.

In terms of biological role, one of the primary rRNA binding proteins. Required for association of the 30S and 50S subunits to form the 70S ribosome, for tRNA binding and peptide bond formation. It has been suggested to have peptidyltransferase activity; this is somewhat controversial. Makes several contacts with the 16S rRNA in the 70S ribosome. The sequence is that of Large ribosomal subunit protein uL2 from Mycoplasma mobile (strain ATCC 43663 / 163K / NCTC 11711) (Mesomycoplasma mobile).